We begin with the raw amino-acid sequence, 130 residues long: Small ribosomal subunit protein uS11 (130 aa).

Belongs to the universal ribosomal protein uS11 family. As to quaternary structure, part of the 30S ribosomal subunit. Interacts with proteins S7 and S18. Binds to IF-3.

Its function is as follows. Located on the platform of the 30S subunit, it bridges several disparate RNA helices of the 16S rRNA. Forms part of the Shine-Dalgarno cleft in the 70S ribosome. The protein is Small ribosomal subunit protein uS11 of Tropheryma whipplei (strain TW08/27) (Whipple's bacillus).